The sequence spans 289 residues: Elongation factor Ts (289 aa).

The tract at residues 82-85 is involved in Mg(2+) ion dislocation from EF-Tu; sequence TDFL.

The protein belongs to the EF-Ts family.

Its subcellular location is the cytoplasm. Its function is as follows. Associates with the EF-Tu.GDP complex and induces the exchange of GDP to GTP. It remains bound to the aminoacyl-tRNA.EF-Tu.GTP complex up to the GTP hydrolysis stage on the ribosome. The sequence is that of Elongation factor Ts from Pseudomonas aeruginosa (strain LESB58).